Reading from the N-terminus, the 83-residue chain is Alpha-neurotoxin NTX-4 (83 aa).

Positions 1-21 are cleaved as a signal peptide; it reads MKTLLLTLLVVTIVCLDLGYT. Disulfide bonds link Cys-24-Cys-45, Cys-38-Cys-62, Cys-64-Cys-75, and Cys-76-Cys-81.

The protein belongs to the three-finger toxin family. Short-chain subfamily. Type I alpha-neurotoxin sub-subfamily. In terms of tissue distribution, expressed by the venom gland.

The protein localises to the secreted. In terms of biological role, binds to muscle nicotinic acetylcholine receptor (nAChR) and inhibit acetylcholine from binding to the receptor, thereby impairing neuromuscular transmission. In Naja sputatrix (Malayan spitting cobra), this protein is Alpha-neurotoxin NTX-4.